Consider the following 349-residue polypeptide: Protein-glutamate methylesterase/protein-glutamine glutaminase (349 aa).

A Response regulatory domain is found at 5–122 (KVLVVDDSAF…SLDLYKVKDE (118 aa)). The residue at position 56 (D56) is a 4-aspartylphosphate. Residues 156–349 (ARPQQAIVAI…AAAIVQLIGE (194 aa)) enclose the CheB-type methylesterase domain. Active-site residues include S168, H195, and D291.

Belongs to the CheB family. Phosphorylated by CheA. Phosphorylation of the N-terminal regulatory domain activates the methylesterase activity.

It is found in the cytoplasm. The catalysed reaction is [protein]-L-glutamate 5-O-methyl ester + H2O = L-glutamyl-[protein] + methanol + H(+). It catalyses the reaction L-glutaminyl-[protein] + H2O = L-glutamyl-[protein] + NH4(+). Its function is as follows. Involved in chemotaxis. Part of a chemotaxis signal transduction system that modulates chemotaxis in response to various stimuli. Catalyzes the demethylation of specific methylglutamate residues introduced into the chemoreceptors (methyl-accepting chemotaxis proteins or MCP) by CheR. Also mediates the irreversible deamidation of specific glutamine residues to glutamic acid. The polypeptide is Protein-glutamate methylesterase/protein-glutamine glutaminase (Geobacillus kaustophilus (strain HTA426)).